A 296-amino-acid polypeptide reads, in one-letter code: Urease accessory protein UreD (296 aa).

It belongs to the UreD family. As to quaternary structure, ureD, UreF and UreG form a complex that acts as a GTP-hydrolysis-dependent molecular chaperone, activating the urease apoprotein by helping to assemble the nickel containing metallocenter of UreC. The UreE protein probably delivers the nickel.

It localises to the cytoplasm. In terms of biological role, required for maturation of urease via the functional incorporation of the urease nickel metallocenter. This Nitrosococcus oceani (strain ATCC 19707 / BCRC 17464 / JCM 30415 / NCIMB 11848 / C-107) protein is Urease accessory protein UreD.